Reading from the N-terminus, the 106-residue chain is Small ribosomal subunit protein uS10 (106 aa).

This sequence belongs to the universal ribosomal protein uS10 family. Part of the 30S ribosomal subunit.

Functionally, involved in the binding of tRNA to the ribosomes. The protein is Small ribosomal subunit protein uS10 of Pyrobaculum neutrophilum (strain DSM 2338 / JCM 9278 / NBRC 100436 / V24Sta) (Thermoproteus neutrophilus).